The chain runs to 510 residues: MTELTLKPGTLTLAQLRAIHAAPVRLQLDASAAPAIDASVACVEQIIAEDRTAYGINTGFGLLASTRIASHDLENLQRSLVLSHAAGIGAPLDDDLVRLIMVLKINSLSRGFSGIRRKVIDALIALVNAEVYPHIPLKGSVGASGDLAPLAHMSLVLLGEGKARYKGQWLPATEALAIAGLEPLTLAAKEGLALLNGTQASTAYALRGLFQAEDLYAAAIACGGLSVEAALGSRSPFDARVHEVRGQRGQIDTAACFRDLLGDSSEVSLSHKNCDKVQDPYSLRCQPQVMGACLTQLRQAAEVLGIEANAVSDNPLVFAAEGDVISGGNFHAEPVAMAADNLALAIAEIGSLSERRISLMMDKHMSQLPPFLVENGGVNSGFMIAQVTAAALASENKALSHPHSVDSLPTSANQEDHVSMAPAAGKRLWEMAENTRGVLAIEWLGACQGLDLRKGLKTSAKLEQARQALRSEVPHYDRDRFFAPDIEKAVDLLAKGSLTGLLPAGVLPSL.

The segment at residues 143–145 (ASG) is a cross-link (5-imidazolinone (Ala-Gly)). Residue serine 144 is modified to 2,3-didehydroalanine (Ser).

It belongs to the PAL/histidase family. Post-translationally, contains an active site 4-methylidene-imidazol-5-one (MIO), which is formed autocatalytically by cyclization and dehydration of residues Ala-Ser-Gly.

It is found in the cytoplasm. It carries out the reaction L-histidine = trans-urocanate + NH4(+). It participates in amino-acid degradation; L-histidine degradation into L-glutamate; N-formimidoyl-L-glutamate from L-histidine: step 1/3. This chain is Histidine ammonia-lyase, found in Pseudomonas putida (strain ATCC 47054 / DSM 6125 / CFBP 8728 / NCIMB 11950 / KT2440).